The primary structure comprises 106 residues: Cell division protein FtsB (106 aa).

The Cytoplasmic portion of the chain corresponds to 1-3 (MGK). The chain crosses the membrane as a helical span at residues 4–21 (LTLLLLALLGWLQYSLWL). Topologically, residues 22–106 (GKNGVHDYVR…ASSSQNNLQK (85 aa)) are periplasmic. Positions 40 to 62 (QGSNAKLKARNDQLFAEIDDLNG) form a coiled coil.

The protein belongs to the FtsB family. As to quaternary structure, part of a complex composed of FtsB, FtsL and FtsQ.

Its subcellular location is the cell inner membrane. Functionally, essential cell division protein. May link together the upstream cell division proteins, which are predominantly cytoplasmic, with the downstream cell division proteins, which are predominantly periplasmic. This chain is Cell division protein FtsB, found in Serratia proteamaculans (strain 568).